Here is a 242-residue protein sequence, read N- to C-terminus: Prosalusin (242 aa).

The N-terminal stretch at 1-26 is a signal peptide; it reads MAAATRGCRPWGSLLGLLGLVSAAAA. The propeptide occupies 27-189; it reads AWDLASLRCT…SSWVVYGTNY (163 aa). 93–100 provides a ligand contact to ATP; sequence GWTGTGKS. N-linked (GlcNAc...) asparagine glycosylation is present at asparagine 149. Residues 210-242 form a disordered region; the sequence is PPRRSGALPPAPAAPRPALRAQRAGPAGPGAKG. The segment covering 225-235 has biased composition (low complexity); it reads RPALRAQRAGP. Lysine 241 is modified (lysine amide).

This sequence belongs to the ClpA/ClpB family. Torsin subfamily. Amidation of salusin-alpha(29-Gly) by peptidylglycine alpha-amidating monooxygenase, PAM, converts Lys-241-Gly-242 to Lys-241-NH2 and gives raise to salusin-alpha. As to expression, isoform 4 is ubiquitously expressed, with high level in vascular endothelial cells and vascular smooth muscle cells.

It is found in the secreted. Salusins -alpha and -beta may be endocrine and/or paracrine factors able to increase intracellular calcium concentrations and induce cell mitogenesis. Salusins may also be potent hypotensive peptides. The polypeptide is Prosalusin (TOR2A) (Homo sapiens (Human)).